Reading from the N-terminus, the 120-residue chain is Cytochrome c oxidase subunit 5 (120 aa).

Blocked amino end (Ser) is present on S2. Residues C76, H84, C99, and C102 each contribute to the Zn(2+) site.

It belongs to the cytochrome c oxidase subunit 5B family. In terms of assembly, component of the cytochrome c oxidase (complex IV, CIV), a multisubunit enzyme composed of a catalytic core of 3 subunits and several supernumerary subunits. The complex exists as a monomer or a dimer and forms supercomplexes (SCs) in the inner mitochondrial membrane with ubiquinol-cytochrome c oxidoreductase (cytochrome b-c1 complex, complex III, CIII). Slime mold cytochrome c oxidase consists of at least seven different polypeptides species, subunits I, II, III, IV, V, VI, and VIIe/s in order of MW.

It is found in the mitochondrion inner membrane. It functions in the pathway energy metabolism; oxidative phosphorylation. Component of the cytochrome c oxidase, the last enzyme in the mitochondrial electron transport chain which drives oxidative phosphorylation. The respiratory chain contains 3 multisubunit complexes succinate dehydrogenase (complex II, CII), ubiquinol-cytochrome c oxidoreductase (cytochrome b-c1 complex, complex III, CIII) and cytochrome c oxidase (complex IV, CIV), that cooperate to transfer electrons derived from NADH and succinate to molecular oxygen, creating an electrochemical gradient over the inner membrane that drives transmembrane transport and the ATP synthase. Cytochrome c oxidase is the component of the respiratory chain that catalyzes the reduction of oxygen to water. Electrons originating from reduced cytochrome c in the intermembrane space (IMS) are transferred via the dinuclear copper A center (CU(A)) of subunit 2 and heme A of subunit 1 to the active site in subunit 1, a binuclear center (BNC) formed by heme A3 and copper B (CU(B)). The BNC reduces molecular oxygen to 2 water molecules using 4 electrons from cytochrome c in the IMS and 4 protons from the mitochondrial matrix. The protein is Cytochrome c oxidase subunit 5 (cxeA) of Dictyostelium discoideum (Social amoeba).